The sequence spans 356 residues: Histidinol-phosphate aminotransferase (356 aa).

Lys214 carries the N6-(pyridoxal phosphate)lysine modification.

It belongs to the class-II pyridoxal-phosphate-dependent aminotransferase family. Histidinol-phosphate aminotransferase subfamily. Homodimer. It depends on pyridoxal 5'-phosphate as a cofactor.

The enzyme catalyses L-histidinol phosphate + 2-oxoglutarate = 3-(imidazol-4-yl)-2-oxopropyl phosphate + L-glutamate. The protein operates within amino-acid biosynthesis; L-histidine biosynthesis; L-histidine from 5-phospho-alpha-D-ribose 1-diphosphate: step 7/9. The protein is Histidinol-phosphate aminotransferase of Escherichia coli O6:K15:H31 (strain 536 / UPEC).